Reading from the N-terminus, the 231-residue chain is Enolase-phosphatase E1 (231 aa).

It belongs to the HAD-like hydrolase superfamily. MasA/MtnC family. In terms of assembly, monomer. The cofactor is Mg(2+).

It carries out the reaction 5-methylsulfanyl-2,3-dioxopentyl phosphate + H2O = 1,2-dihydroxy-5-(methylsulfanyl)pent-1-en-3-one + phosphate. It functions in the pathway amino-acid biosynthesis; L-methionine biosynthesis via salvage pathway; L-methionine from S-methyl-5-thio-alpha-D-ribose 1-phosphate: step 3/6. Its pathway is amino-acid biosynthesis; L-methionine biosynthesis via salvage pathway; L-methionine from S-methyl-5-thio-alpha-D-ribose 1-phosphate: step 4/6. Functionally, bifunctional enzyme that catalyzes the enolization of 2,3-diketo-5-methylthiopentyl-1-phosphate (DK-MTP-1-P) into the intermediate 2-hydroxy-3-keto-5-methylthiopentenyl-1-phosphate (HK-MTPenyl-1-P), which is then dephosphorylated to form the acireductone 1,2-dihydroxy-3-keto-5-methylthiopentene (DHK-MTPene). The sequence is that of Enolase-phosphatase E1 from Granulibacter bethesdensis (strain ATCC BAA-1260 / CGDNIH1).